The chain runs to 445 residues: E3 ubiquitin-protein ligase pellino homolog 3 (445 aa).

A disordered region spans residues 1 to 24 (MVLEGNPDVGSPRTSDLQHPGSQG). Ser-11 is modified (phosphoserine). Over residues 12–24 (PRTSDLQHPGSQG) the composition is skewed to polar residues.

Belongs to the pellino family. As to quaternary structure, interacts with TRAF6, MAP3K14 and MAP3K7. Phosphorylated by IRAK1 enhancing its E3 ligase activity.

The catalysed reaction is S-ubiquitinyl-[E2 ubiquitin-conjugating enzyme]-L-cysteine + [acceptor protein]-L-lysine = [E2 ubiquitin-conjugating enzyme]-L-cysteine + N(6)-ubiquitinyl-[acceptor protein]-L-lysine.. It functions in the pathway protein modification; protein ubiquitination. Functionally, E3 ubiquitin ligase catalyzing the covalent attachment of ubiquitin moieties onto substrate proteins. Involved in the TLR and IL-1 signaling pathways via interaction with the complex containing IRAK kinases and TRAF6. Mediates 'Lys-63'-linked polyubiquitination of IRAK1. Can activate AP1/JUN and ELK1. Acts as a regulator of innate immunity by mediating 'Lys-63'-linked polyubiquitination of RIPK2 downstream of NOD1 and NOD2, thereby transforming RIPK2 into a scaffolding protein for downstream effectors, ultimately leading to activation of the NF-kappa-B and MAP kinases signaling. Catalyzes 'Lys-63'-linked polyubiquitination of RIPK2 in parallel of XIAP. This chain is E3 ubiquitin-protein ligase pellino homolog 3, found in Mus musculus (Mouse).